The sequence spans 37 residues: Large ribosomal subunit protein bL36 (37 aa).

This sequence belongs to the bacterial ribosomal protein bL36 family.

This Gloeobacter violaceus (strain ATCC 29082 / PCC 7421) protein is Large ribosomal subunit protein bL36.